The sequence spans 149 residues: Down syndrome critical region protein 9 (149 aa).

The tract at residues 1–41 (MGRICPVNSRARRLRARPGRPSGDSLPYHQLQGGAPRLWSP) is disordered.

In terms of tissue distribution, testis specific.

This chain is Down syndrome critical region protein 9 (DSCR9), found in Homo sapiens (Human).